The sequence spans 302 residues: Ornithine carbamoyltransferase (302 aa).

Carbamoyl phosphate-binding positions include 52-55 (STRT), Gln79, Arg103, and 130-133 (HPCQ). L-ornithine contacts are provided by residues Asn161, Asp221, and 225–226 (SM). Residues 261-262 (CL) and Arg289 each bind carbamoyl phosphate.

It belongs to the aspartate/ornithine carbamoyltransferase superfamily. OTCase family.

Its subcellular location is the cytoplasm. It carries out the reaction carbamoyl phosphate + L-ornithine = L-citrulline + phosphate + H(+). It functions in the pathway amino-acid biosynthesis; L-arginine biosynthesis; L-arginine from L-ornithine and carbamoyl phosphate: step 1/3. In terms of biological role, reversibly catalyzes the transfer of the carbamoyl group from carbamoyl phosphate (CP) to the N(epsilon) atom of ornithine (ORN) to produce L-citrulline. The sequence is that of Ornithine carbamoyltransferase from Syntrophotalea carbinolica (strain DSM 2380 / NBRC 103641 / GraBd1) (Pelobacter carbinolicus).